Here is a 111-residue protein sequence, read N- to C-terminus: Iron-sulfur cluster assembly protein CyaY (111 aa).

Belongs to the frataxin family.

Involved in iron-sulfur (Fe-S) cluster assembly. May act as a regulator of Fe-S biogenesis. This chain is Iron-sulfur cluster assembly protein CyaY, found in Cupriavidus pinatubonensis (strain JMP 134 / LMG 1197) (Cupriavidus necator (strain JMP 134)).